Reading from the N-terminus, the 256-residue chain is Thiazole synthase (256 aa).

Lysine 95 acts as the Schiff-base intermediate with DXP in catalysis. Residues glycine 156, 182–183, and 204–205 contribute to the 1-deoxy-D-xylulose 5-phosphate site; these read AG and NT.

Belongs to the ThiG family. As to quaternary structure, homotetramer. Forms heterodimers with either ThiH or ThiS.

The protein localises to the cytoplasm. It carries out the reaction [ThiS sulfur-carrier protein]-C-terminal-Gly-aminoethanethioate + 2-iminoacetate + 1-deoxy-D-xylulose 5-phosphate = [ThiS sulfur-carrier protein]-C-terminal Gly-Gly + 2-[(2R,5Z)-2-carboxy-4-methylthiazol-5(2H)-ylidene]ethyl phosphate + 2 H2O + H(+). Its pathway is cofactor biosynthesis; thiamine diphosphate biosynthesis. Catalyzes the rearrangement of 1-deoxy-D-xylulose 5-phosphate (DXP) to produce the thiazole phosphate moiety of thiamine. Sulfur is provided by the thiocarboxylate moiety of the carrier protein ThiS. In vitro, sulfur can be provided by H(2)S. This is Thiazole synthase from Citrobacter koseri (strain ATCC BAA-895 / CDC 4225-83 / SGSC4696).